The sequence spans 305 residues: Probable 5-dehydro-4-deoxyglucarate dehydratase (305 aa).

It belongs to the DapA family.

It catalyses the reaction 5-dehydro-4-deoxy-D-glucarate + H(+) = 2,5-dioxopentanoate + CO2 + H2O. The protein operates within carbohydrate acid metabolism; D-glucarate degradation; 2,5-dioxopentanoate from D-glucarate: step 2/2. The protein is Probable 5-dehydro-4-deoxyglucarate dehydratase of Xanthomonas campestris pv. campestris (strain 8004).